A 343-amino-acid polypeptide reads, in one-letter code: D-alanine--D-alanine ligase (343 aa).

Positions 132 to 337 (KNLFSYHKIP…YPDLIDKLIE (206 aa)) constitute an ATP-grasp domain. 165 to 220 (DRFLGWPCFVKPANMGSSIGVSKVHSPGEVKKALEKGFYYDRKLIFEEFVEGREIE) lines the ATP pocket. Residues Asp291, Glu304, and Asn306 each contribute to the Mg(2+) site.

The protein belongs to the D-alanine--D-alanine ligase family. Requires Mg(2+) as cofactor. The cofactor is Mn(2+).

It is found in the cytoplasm. It carries out the reaction 2 D-alanine + ATP = D-alanyl-D-alanine + ADP + phosphate + H(+). The protein operates within cell wall biogenesis; peptidoglycan biosynthesis. Functionally, cell wall formation. The protein is D-alanine--D-alanine ligase of Halothermothrix orenii (strain H 168 / OCM 544 / DSM 9562).